The following is a 174-amino-acid chain: Dual-action ribosomal maturation protein DarP (174 aa).

The protein belongs to the DarP family.

Its subcellular location is the cytoplasm. In terms of biological role, member of a network of 50S ribosomal subunit biogenesis factors which assembles along the 30S-50S interface, preventing incorrect 23S rRNA structures from forming. Promotes peptidyl transferase center (PTC) maturation. This Pseudomonas aeruginosa (strain LESB58) protein is Dual-action ribosomal maturation protein DarP.